A 433-amino-acid polypeptide reads, in one-letter code: Agnestins efflux protein AgnL12 (433 aa).

Polar residues-rich tracts occupy residues 1–10 (MSRSTSTELQ) and 25–40 (SIAS…PPST). The disordered stretch occupies residues 1–40 (MSRSTSTELQQELPASKEVPPDPTSIASSETASGSKPPST). Helical transmembrane passes span 47 to 67 (ILVL…TNAF), 87 to 107 (ISWI…ISGY), 116 to 136 (LLIC…SLST), 141 to 161 (IFLT…LPAM), 174 to 194 (LAMG…PIAL), 205 to 225 (WTVR…CLAI), 248 to 268 (VMIF…SPFF), 285 to 305 (FYMV…PGLI), 309 to 329 (VGNY…ACCW), 335 to 355 (VGGI…VISL), 370 to 390 (GVAM…GTPI), and 401 to 421 (LGLS…ILLA).

This sequence belongs to the major facilitator superfamily. Monocarboxylate porter (TC 2.A.1.13) family.

The protein resides in the cell membrane. In terms of biological role, efflux pump that may be involved in the secretion of agnestins, dihydroxy-xanthone metabolites. The protein is Agnestins efflux protein AgnL12 of Paecilomyces divaricatus (Penicillium divaricatum).